The following is a 350-amino-acid chain: (RS)-norcoclaurine 6-O-methyltransferase (350 aa).

M166 contributes to the S-adenosyl-L-methionine binding site. Position 169 (D169) interacts with substrate. S-adenosyl-L-methionine is bound by residues T170, G195, D218, 238 to 239 (DM), and K252. Substrate is bound by residues 253-257 (CILHD) and D306. The Proton acceptor role is filled by H256.

The protein belongs to the class I-like SAM-binding methyltransferase superfamily. Cation-independent O-methyltransferase family. COMT subfamily. In terms of assembly, homodimer. As to expression, expressed in leaf primordia of rhizomes and root endodermis.

It catalyses the reaction (S)-norcoclaurine + S-adenosyl-L-methionine = (S)-coclaurine + S-adenosyl-L-homocysteine + H(+). It carries out the reaction norcoclaurine + S-adenosyl-L-methionine = coclaurine + S-adenosyl-L-homocysteine + H(+). With respect to regulation, inhibited by sanguinarine. In terms of biological role, involved in the biosynthesis of coclaurine, a precursor of benzylisoquinoline alkaloids. Catalyzes the transfer of the S-methyl group of S-adenosyl-L-methionine (AdoMet) to the 6-hydroxyl group of norcoclaurine to form coclaurine. The chain is (RS)-norcoclaurine 6-O-methyltransferase from Thalictrum flavum subsp. glaucum (Yellow meadow rue).